The following is a 165-amino-acid chain: Large ribosomal subunit protein uL11 (165 aa).

It belongs to the universal ribosomal protein uL11 family.

In terms of biological role, binds directly to 26S ribosomal RNA. The chain is Large ribosomal subunit protein uL11 (rpl-12) from Caenorhabditis briggsae.